Here is a 106-residue protein sequence, read N- to C-terminus: UPF0145 protein azo0572 (106 aa).

It belongs to the UPF0145 family.

In Azoarcus sp. (strain BH72), this protein is UPF0145 protein azo0572.